We begin with the raw amino-acid sequence, 178 residues long: MTEIPSSFVLPDPEWIYRVGIGQDSHRFLPDEDPKPCILGGIIFENTPGFEANSDGDVVFHAICNAFSSVTHKGILGGLADELLKTKGITDSVVYLQEAIASLKPTQRVSHLAITIEGKRPKLLPQLPSMRKRIAEVLHIPLDSINITATSGEGLTAMGQGYGVQCFCVLTIMEYCRY.

A divalent metal cation-binding residues include aspartate 24, histidine 26, and histidine 61. 24-26 (DSH) contributes to the 4-CDP-2-C-methyl-D-erythritol 2-phosphate binding site. 4-CDP-2-C-methyl-D-erythritol 2-phosphate is bound at residue 150–153 (TSGE).

Belongs to the IspF family. Homotrimer. The cofactor is a divalent metal cation.

The catalysed reaction is 4-CDP-2-C-methyl-D-erythritol 2-phosphate = 2-C-methyl-D-erythritol 2,4-cyclic diphosphate + CMP. It participates in isoprenoid biosynthesis; isopentenyl diphosphate biosynthesis via DXP pathway; isopentenyl diphosphate from 1-deoxy-D-xylulose 5-phosphate: step 4/6. Involved in the biosynthesis of isopentenyl diphosphate (IPP) and dimethylallyl diphosphate (DMAPP), two major building blocks of isoprenoid compounds. Catalyzes the conversion of 4-diphosphocytidyl-2-C-methyl-D-erythritol 2-phosphate (CDP-ME2P) to 2-C-methyl-D-erythritol 2,4-cyclodiphosphate (ME-CPP) with a corresponding release of cytidine 5-monophosphate (CMP). The protein is 2-C-methyl-D-erythritol 2,4-cyclodiphosphate synthase of Chlamydia trachomatis serovar L2b (strain UCH-1/proctitis).